We begin with the raw amino-acid sequence, 94 residues long: CRISPR-associated endoribonuclease Cas2 1 (94 aa).

Aspartate 8 contributes to the Mg(2+) binding site.

It belongs to the CRISPR-associated endoribonuclease Cas2 protein family. Homodimer, forms a heterotetramer with a Cas1 homodimer. It depends on Mg(2+) as a cofactor.

CRISPR (clustered regularly interspaced short palindromic repeat), is an adaptive immune system that provides protection against mobile genetic elements (viruses, transposable elements and conjugative plasmids). CRISPR clusters contain sequences complementary to antecedent mobile elements and target invading nucleic acids. CRISPR clusters are transcribed and processed into CRISPR RNA (crRNA). Functions as a ssRNA-specific endoribonuclease. Involved in the integration of spacer DNA into the CRISPR cassette. The polypeptide is CRISPR-associated endoribonuclease Cas2 1 (Synechocystis sp. (strain ATCC 27184 / PCC 6803 / Kazusa)).